The chain runs to 1404 residues: MKDLLKFLKQQSKTEEFEGIKIGLASPDLIRSWSFGEVKKPETINYRTFKPEREGLFCARIFGPVKDYECLCGKYKRLKHRGVICEKCGVEVTQTKVRRERMGHIDLASPVAHIWFLKSLPSRIGLMLDMTLRDIERVLYFESFVVIEPGMTSLERGQMLTEENYLDALEEYGDEFEAKMGAEAVLELLRAIDLEKEIEEMREELPSINSETRRKKITKRLKLIEAFYQSGNKPEWMILKVLPVLPPDLRPLVPLDGGRFATSDLNDLYRRVINRNNRLKRLLDLAAPDIIVRNEKRMLQESVDALLDNGRRGRAITGSNKRPLKSLADMIKGKQGRFRQNLLGKRVDYSGRSVITVGPTLRLHQCGLPKKMALELFKPFIYGKLEGRGLATTIKAAKKMVEREVPEVWDVLDDVIREHPVMLNRAPTLHRLGIQAFEPVLIEGKAIQLHPLVCAAYNADFDGDQMAVHVPLTLEAQLEARSLMMSTNNILSPANGEPVITPSQDVVLGLYYTSRERINGRGEGMAFESVAEVEKAYRTGVAELHARVKVRITETTIAEDGERTESRRIVDTTVGRALLSQVLPKGLSYDLVNQNMGKKQISKLLNTCYRQLGLKDTVIFADQLMYTGFHFATVSGASVGINDMVIPDEKYSLVADAEAEVLEIQEQFQSGLVTAGERYNKVIDIWASANEKVSKAMMDNLSTETVINRDGEEETQASFNSIYMMADSGARGSAAQIRQLAGMRGLMAKPDGSIIETPITANFREGLNVLQYFISTHGARKGLADTALKTANSGYLTRRLVDVAQDLVVIEDDCGTHEGLTMKPLIEGGDVVEPLRERVLGRVVAEDVYYPGTEDVLAPRNTLLDEAWCDKLEEHSIDEVKVRSVISCDTDFGVCAACYGRDLARGHLINQGEAIGVVAAQSIGEPGTQLTMRTFHIGGAASRASAENNVQVKNAGTVKLHNAKHVTNSDGKLVIVSRSSEIAIIDELGREKERYKVPYGTVLEKLEDATVNAGEVIANRDPHTHPIVSEVAGSIKFVDMIEGVTMTRQTDELTGLSSIVVMDVGQRPTAGKEMRPAIRLVGADGNDLMIPGTEVPAQYFLPGKAIVNQDDNAQIAVGDALARIPQESSKTRDITGGLPRVADLFEARKPKEPAILAEYSGTISFGKETKGKRRLVITPADGGKPYEEMIPKWRNLNVFEGEKVERGEVIADGPEAAHDILRLRGIHKVANYIVNEVQDVYRLQGVKINDKHIEVIIRQMLRKCEITEAGDSEFLPGEQVEVSRVKIANRELEAQGKEPAKFERELLGITKASLATESFISAASFQETTRVLTEAAVGGKSDKLRGLKENVIVGRLIPAGTGYAYHTSRNQAAQNGPAEEVPAISASEAEQNLADLLNLAGSPE.

Residues Cys70, Cys72, Cys85, and Cys88 each contribute to the Zn(2+) site. Residues Asp460, Asp462, and Asp464 each coordinate Mg(2+). Cys814, Cys888, Cys895, and Cys898 together coordinate Zn(2+).

Belongs to the RNA polymerase beta' chain family. The RNAP catalytic core consists of 2 alpha, 1 beta, 1 beta' and 1 omega subunit. When a sigma factor is associated with the core the holoenzyme is formed, which can initiate transcription. Requires Mg(2+) as cofactor. Zn(2+) is required as a cofactor.

It carries out the reaction RNA(n) + a ribonucleoside 5'-triphosphate = RNA(n+1) + diphosphate. In terms of biological role, DNA-dependent RNA polymerase catalyzes the transcription of DNA into RNA using the four ribonucleoside triphosphates as substrates. The polypeptide is DNA-directed RNA polymerase subunit beta' (Shewanella loihica (strain ATCC BAA-1088 / PV-4)).